The chain runs to 1435 residues: DNA polymerase III PolC-type (1435 aa).

Residues 420–576 enclose the Exonuclease domain; the sequence is YVVFDVETTG…YDTEATAYIF (157 aa).

It belongs to the DNA polymerase type-C family. PolC subfamily.

It localises to the cytoplasm. The enzyme catalyses DNA(n) + a 2'-deoxyribonucleoside 5'-triphosphate = DNA(n+1) + diphosphate. Required for replicative DNA synthesis. This DNA polymerase also exhibits 3' to 5' exonuclease activity. This chain is DNA polymerase III PolC-type, found in Staphylococcus aureus.